A 400-amino-acid polypeptide reads, in one-letter code: Multidrug resistance protein MdtH (400 aa).

The Cytoplasmic segment spans residues 1 to 12 (MSRVSQARNLGK). A helical membrane pass occupies residues 13 to 33 (YFLLIDNMLVVLGFFVVFPLI). The Periplasmic portion of the chain corresponds to 34–98 (SIRFVDQMGW…GFATMGIAHE (65 aa)). The chain crosses the membrane as a helical span at residues 99–116 (PWLLWFSCLLSGLGGTLF). The Cytoplasmic portion of the chain corresponds to 117–138 (DPPRSALVVKLIRPQQRGRFFS). Residues 139–159 (LLMMQDSAGAVIGALLGSWLL) form a helical membrane-spanning segment. Over 160 to 164 (QYDFR) the chain is Periplasmic. Residues 165–185 (LVCATGAVLFVLCAAFNAWLL) traverse the membrane as a helical segment. The Cytoplasmic segment spans residues 186–213 (PAWKLSTVRTPVREGMTRVMRDKRFVTY). The chain crosses the membrane as a helical span at residues 214–232 (VLTLAGYYMLAVQVMLPIM). Topologically, residues 233 to 241 (VNDVAGAPS) are periplasmic. Residues 242–262 (AVKWMYAIEACLSLTLLYPIA) form a helical membrane-spanning segment. Over 263–274 (RWSEKHFRLEHR) the chain is Cytoplasmic. A helical transmembrane segment spans residues 275 to 295 (LMAGLLIMSLSMMPVGMVSGL). Over 296-297 (QQ) the chain is Periplasmic. Residues 298 to 318 (LFTLICLFYIGSIIAEPARET) traverse the membrane as a helical segment. The Cytoplasmic segment spans residues 319–337 (LSASLADARARGSYMGFSR). A helical transmembrane segment spans residues 338–358 (LGLAIGGAIGYIGGGWLFDLG). The Periplasmic portion of the chain corresponds to 359-365 (KSAHQPE). A helical transmembrane segment spans residues 366 to 386 (LPWMMLGIIGIFTFLALGWQF). Topologically, residues 387–400 (SQKRAARRLLERDA) are cytoplasmic.

The protein belongs to the major facilitator superfamily. DHA1 family. MdtH (TC 2.A.1.2.21) subfamily.

It localises to the cell inner membrane. The polypeptide is Multidrug resistance protein MdtH (Shigella boydii serotype 4 (strain Sb227)).